We begin with the raw amino-acid sequence, 438 residues long: Choline monooxygenase, chloroplastic (438 aa).

The N-terminal 58 residues, 1-58, are a transit peptide targeting the chloroplast; that stretch reads MAASATTMLLKYPTTVCGIPNSSANNSTDPSNNIVQIPQTTTTNSPLLKFRTPNKPVN. Residues 121–228 enclose the Rieske domain; sequence WQVAGYSDQV…VAVWGPFILI (108 aa). The [2Fe-2S] cluster site is built by cysteine 163, histidine 165, cysteine 182, and histidine 185. 2 residues coordinate Fe cation: histidine 288 and histidine 293.

Belongs to the choline monooxygenase family. The cofactor is [2Fe-2S] cluster. Fe cation serves as cofactor. It depends on Mg(2+) as a cofactor. Expressed in roots and leaves.

It localises to the plastid. The protein resides in the chloroplast stroma. It carries out the reaction choline + 2 reduced [2Fe-2S]-[ferredoxin] + O2 + 2 H(+) = betaine aldehyde hydrate + 2 oxidized [2Fe-2S]-[ferredoxin] + H2O. Its pathway is amine and polyamine biosynthesis; betaine biosynthesis via choline pathway; betaine aldehyde from choline (monooxygenase route): step 1/1. In terms of biological role, catalyzes the first step of the osmoprotectant glycine betaine synthesis. The sequence is that of Choline monooxygenase, chloroplastic (CMO) from Atriplex hortensis (Mountain spinach).